Reading from the N-terminus, the 412-residue chain is MNHTRVEQNRGRTARKLRLALMGPAFIAAIGYIDPGNFATNIQAGASFGYQLLWVVVWANLMAMLIQVLSAKLGIATGKNLAEQIRDHYPRPVVWFYWVQAEIIAMATDLAEFIGAAIGFKLILGVSLLQGAVLTGIATFLILMLQKRGQKPLEKVIGGLLLFVAAAYIVELFFSQPKLAELGKGMLIPSLPTSEAVFLAAGVLGATIMPHVIYLHSSLTQNLHDGSRKERYSATKWDVAIAMTIAGFVNLAMMATAAAAFHFSGHTKVAELDQAYLTLEPLLSHAAATIFGLSLVAAGLSSTVVGTLAGQVVMQGFVRFSIPLWVRRAVTMAPSFIVILMGLDPTRILVMSQVLLSFGIALALVPLLFFTSNKALMAELVNTPWVKRTGWAIVVLVVALNIWLLVGTALGL.

The next 11 membrane-spanning stretches (helical) occupy residues 19 to 39 (LALM…GNFA), 46 to 66 (ASFG…AMLI), 94 to 114 (VWFY…AEFI), 122 to 142 (LILG…TFLI), 156 to 176 (VIGG…FFSQ), 196 to 216 (AVFL…IYLH), 241 to 261 (IAMT…AAAF), 290 to 310 (IFGL…TLAG), 322 to 342 (IPLW…ILMG), 348 to 368 (ILVM…VPLL), and 392 to 412 (AIVV…ALGL).

This sequence belongs to the NRAMP family.

Its subcellular location is the cell inner membrane. H(+)-stimulated, divalent metal cation uptake system. The polypeptide is Divalent metal cation transporter MntH (Cronobacter sakazakii (strain ATCC BAA-894) (Enterobacter sakazakii)).